The sequence spans 442 residues: ATP-dependent protease ATPase subunit HslU (442 aa).

Residues Ile-18 and 60–65 (GVGKTE) each bind ATP. Residues 133-156 (DALLPKPKNDWDNTDSDTSSNTRQ) form a disordered region. ATP-binding residues include Asp-255, Glu-320, and Arg-392.

It belongs to the ClpX chaperone family. HslU subfamily. A double ring-shaped homohexamer of HslV is capped on each side by a ring-shaped HslU homohexamer. The assembly of the HslU/HslV complex is dependent on binding of ATP.

It is found in the cytoplasm. ATPase subunit of a proteasome-like degradation complex; this subunit has chaperone activity. The binding of ATP and its subsequent hydrolysis by HslU are essential for unfolding of protein substrates subsequently hydrolyzed by HslV. HslU recognizes the N-terminal part of its protein substrates and unfolds these before they are guided to HslV for hydrolysis. In Shewanella sp. (strain ANA-3), this protein is ATP-dependent protease ATPase subunit HslU.